The sequence spans 106 residues: UPF0145 protein VCM66_A0911 (106 aa).

This sequence belongs to the UPF0145 family.

This chain is UPF0145 protein VCM66_A0911, found in Vibrio cholerae serotype O1 (strain M66-2).